Here is a 291-residue protein sequence, read N- to C-terminus: MLAATDLARILDGRRIADDLLDALKTRVDARVAAGKLPPTLAVVLVGSDPASVVYVRNKRRAAEKVGIKAYDFDLPEATTEAELAALIDRLNADPKIHGVLIQLPLPGIPDAHRLIQRIDPRKDVDGFHPQNVGHLALREFGLRPCTPRGIVTLLGHTDRPVRGRNATIVGVSNHVGRPMGLELLMAGCTVTSCHKFTPPQMLEAAVRQADILIVAVGRPGVIPGEWVKPGAVVIDVGINRLDDGQLVGDVGFESAVKRASWITPVPGGVGPMTVATLMQNTLEAAEATDC.

Residues 171 to 173 and Ile-239 each bind NADP(+); that span reads GVS.

The protein belongs to the tetrahydrofolate dehydrogenase/cyclohydrolase family. As to quaternary structure, homodimer.

It catalyses the reaction (6R)-5,10-methylene-5,6,7,8-tetrahydrofolate + NADP(+) = (6R)-5,10-methenyltetrahydrofolate + NADPH. The catalysed reaction is (6R)-5,10-methenyltetrahydrofolate + H2O = (6R)-10-formyltetrahydrofolate + H(+). It participates in one-carbon metabolism; tetrahydrofolate interconversion. In terms of biological role, catalyzes the oxidation of 5,10-methylenetetrahydrofolate to 5,10-methenyltetrahydrofolate and then the hydrolysis of 5,10-methenyltetrahydrofolate to 10-formyltetrahydrofolate. This Xylella fastidiosa (strain Temecula1 / ATCC 700964) protein is Bifunctional protein FolD.